The primary structure comprises 449 residues: Glucose-6-phosphate isomerase (449 aa).

The active-site Proton donor is the E290. Residues H311 and K425 contribute to the active site.

The protein belongs to the GPI family.

The protein resides in the cytoplasm. It carries out the reaction alpha-D-glucose 6-phosphate = beta-D-fructose 6-phosphate. It participates in carbohydrate biosynthesis; gluconeogenesis. It functions in the pathway carbohydrate degradation; glycolysis; D-glyceraldehyde 3-phosphate and glycerone phosphate from D-glucose: step 2/4. Its function is as follows. Catalyzes the reversible isomerization of glucose-6-phosphate to fructose-6-phosphate. The sequence is that of Glucose-6-phosphate isomerase from Clostridium tetani (strain Massachusetts / E88).